Consider the following 546-residue polypeptide: Probable ATP-dependent RNA helicase DDX56 (546 aa).

The short motif at 7–35 is the Q motif element; it reads LGFEHMGLDPRLLQAVTDLGWSRPTLIQE. A Helicase ATP-binding domain is found at 38 to 218; sequence IPLALEGKDL…ELVLHNPVTL (181 aa). 51–58 lines the ATP pocket; sequence ARTGSGKT. Ser-126 carries the phosphoserine modification. Thr-141 is subject to Phosphothreonine. Positions 166 to 169 match the DEAD box motif; it reads DEAD. The Helicase C-terminal domain occupies 230–424; the sequence is QLQQFQVVCE…PYQFQMEEIE (195 aa). Disordered stretches follow at residues 324 to 344 and 508 to 546; these read VKGK…PESG and RKKR…AKPS. Composition is skewed to basic residues over residues 325 to 334, 508 to 524, and 532 to 546; these read KGKRRGRGSK, RKKR…KKVK, and FKHR…AKPS.

Belongs to the DEAD box helicase family. DDX56/DBP9 subfamily. As to quaternary structure, may form homooligomeric complexes. Interacts with IRF3. Interacts with OCT4 and POU5F1.

The protein resides in the nucleus. Its subcellular location is the nucleolus. It carries out the reaction ATP + H2O = ADP + phosphate + H(+). Functionally, nucleolar RNA helicase that plays a role in various biological processes including innate immunity, ribosome biogenesis or nucleolus organization. Plays an essential role in maintaining nucleolar integrity in planarian stem cells. Maintains embryonic stem cells proliferation by conventional regulation of ribosome assembly and interaction with OCT4 and POU5F1 complex. Regulates antiviral innate immunity by inhibiting the virus-triggered signaling nuclear translocation of IRF3. Mechanistically, acts by disrupting the interaction between IRF3 and importin IPO5. May play a role in later stages of the processing of the pre-ribosomal particles leading to mature 60S ribosomal subunits. Has intrinsic ATPase activity. This chain is Probable ATP-dependent RNA helicase DDX56 (Ddx56), found in Mus musculus (Mouse).